The sequence spans 71 residues: Putative membrane protein insertion efficiency factor (71 aa).

Belongs to the UPF0161 family.

The protein localises to the cell membrane. In terms of biological role, could be involved in insertion of integral membrane proteins into the membrane. In Desulforudis audaxviator (strain MP104C), this protein is Putative membrane protein insertion efficiency factor.